The primary structure comprises 101 residues: Large ribosomal subunit protein uL24 (101 aa).

The protein belongs to the universal ribosomal protein uL24 family. In terms of assembly, part of the 50S ribosomal subunit.

Its function is as follows. One of two assembly initiator proteins, it binds directly to the 5'-end of the 23S rRNA, where it nucleates assembly of the 50S subunit. In terms of biological role, one of the proteins that surrounds the polypeptide exit tunnel on the outside of the subunit. In Cereibacter sphaeroides (strain ATCC 17029 / ATH 2.4.9) (Rhodobacter sphaeroides), this protein is Large ribosomal subunit protein uL24.